The primary structure comprises 740 residues: Protein SMY2 (740 aa).

Phosphoserine is present on residues Ser-12 and Ser-96. Thr-129 carries the post-translational modification Phosphothreonine. Positions Glu-205 to Gly-261 constitute a GYF domain. Phosphothreonine is present on Thr-311. Disordered stretches follow at residues Ile-346 to Leu-510, Pro-523 to Lys-548, and Gln-567 to Lys-592. Residues Glu-364–Thr-439 show a composition bias toward basic and acidic residues. The stretch at Glu-369–Gln-440 forms a coiled coil. A compositionally biased stretch (low complexity) spans Leu-452–Ser-467. Positions Ala-474–Thr-486 are enriched in polar residues. Residues Asn-500–Leu-510 are compositionally biased toward basic and acidic residues. Residues Pro-523–Lys-536 show a composition bias toward polar residues. Ser-545 carries the phosphoserine modification. Ser-602 carries the post-translational modification Phosphoserine.

This sequence belongs to the SMY2/mpd2 family. As to quaternary structure, interacts with EAP1 and MSL5 (via the GYP domain).

Its subcellular location is the cytoplasm. Functionally, suppressor of the MYO2 gene. This Saccharomyces cerevisiae (strain ATCC 204508 / S288c) (Baker's yeast) protein is Protein SMY2 (SMY2).